A 163-amino-acid chain; its full sequence is Phosphopantetheine adenylyltransferase (163 aa).

T9 contributes to the substrate binding site. ATP is bound by residues 9–10 and H17; that span reads TF. K41, L76, and R90 together coordinate substrate. Residues 91–93, E101, and 126–132 contribute to the ATP site; these read GLR and HQAIASR.

It belongs to the bacterial CoaD family. Homohexamer. Mg(2+) is required as a cofactor.

The protein resides in the cytoplasm. It catalyses the reaction (R)-4'-phosphopantetheine + ATP + H(+) = 3'-dephospho-CoA + diphosphate. It participates in cofactor biosynthesis; coenzyme A biosynthesis; CoA from (R)-pantothenate: step 4/5. Functionally, reversibly transfers an adenylyl group from ATP to 4'-phosphopantetheine, yielding dephospho-CoA (dPCoA) and pyrophosphate. This Caulobacter vibrioides (strain ATCC 19089 / CIP 103742 / CB 15) (Caulobacter crescentus) protein is Phosphopantetheine adenylyltransferase.